The following is a 245-amino-acid chain: Small ribosomal subunit protein uS2 (245 aa).

It belongs to the universal ribosomal protein uS2 family.

The chain is Small ribosomal subunit protein uS2 from Pseudomonas putida (strain GB-1).